The primary structure comprises 397 residues: Protein RecA (397 aa).

The interval 1–23 (MALETKPAKDPAAEDKHELDPKR) is disordered. 83–90 (GPESSGKT) lines the ATP pocket.

Belongs to the RecA family.

It localises to the cytoplasm. Its function is as follows. Can catalyze the hydrolysis of ATP in the presence of single-stranded DNA, the ATP-dependent uptake of single-stranded DNA by duplex DNA, and the ATP-dependent hybridization of homologous single-stranded DNAs. It interacts with LexA causing its activation and leading to its autocatalytic cleavage. The sequence is that of Protein RecA from Bifidobacterium longum (strain NCC 2705).